Reading from the N-terminus, the 542-residue chain is CTP synthase (542 aa).

Positions 1 to 266 (MATNYIFVTG…DDLICQRFRL (266 aa)) are amidoligase domain. Residue S14 coordinates CTP. S14 is a binding site for UTP. Residues 15–20 (SLGKGI) and D72 contribute to the ATP site. Residues D72 and E140 each coordinate Mg(2+). CTP is bound by residues 147-149 (DIE), 187-192 (KTKPTQ), and K223. Residues 187 to 192 (KTKPTQ) and K223 contribute to the UTP site. Residue 239-241 (KDV) participates in ATP binding. Residues 291 to 542 (TIGMVGKYVE…VKAAKENQKK (252 aa)) enclose the Glutamine amidotransferase type-1 domain. G352 contacts L-glutamine. C379 serves as the catalytic Nucleophile; for glutamine hydrolysis. Residues 380–383 (LGMQ), E403, and R470 each bind L-glutamine. Active-site residues include H515 and E517.

This sequence belongs to the CTP synthase family. As to quaternary structure, homotetramer.

The catalysed reaction is UTP + L-glutamine + ATP + H2O = CTP + L-glutamate + ADP + phosphate + 2 H(+). It carries out the reaction L-glutamine + H2O = L-glutamate + NH4(+). The enzyme catalyses UTP + NH4(+) + ATP = CTP + ADP + phosphate + 2 H(+). The protein operates within pyrimidine metabolism; CTP biosynthesis via de novo pathway; CTP from UDP: step 2/2. With respect to regulation, allosterically activated by GTP, when glutamine is the substrate; GTP has no effect on the reaction when ammonia is the substrate. The allosteric effector GTP functions by stabilizing the protein conformation that binds the tetrahedral intermediate(s) formed during glutamine hydrolysis. Inhibited by the product CTP, via allosteric rather than competitive inhibition. Its function is as follows. Catalyzes the ATP-dependent amination of UTP to CTP with either L-glutamine or ammonia as the source of nitrogen. Regulates intracellular CTP levels through interactions with the four ribonucleotide triphosphates. This is CTP synthase from Mannheimia succiniciproducens (strain KCTC 0769BP / MBEL55E).